The following is a 1247-amino-acid chain: Leucine-rich repeat-containing protein 53 (1247 aa).

7 LRR repeats span residues 34-55 (TTRV…NLSL), 58-79 (NLAL…ALHG), 82-102 (MLRT…TDHT), 108-129 (SLQV…WFRN), 132-153 (GLTR…SFGG), 158-179 (SLRY…AFRP), and 182-203 (QLQE…FTPL). Residues 214 to 271 (NQWSCTCDLHPLARFLRNYIKSSAHTLRNAKDLNCQPSTAAVAAAQSVLRLSETNCDS) enclose the LRRCT domain. The chain crosses the membrane as a helical span at residues 294 to 314 (LLTVLGFAGAVGLTCLGLVVF). Disordered stretches follow at residues 828 to 866 (SAGH…EDAT), 887 to 927 (VLPF…SPRN), and 1223 to 1247 (ENSA…LETE). Composition is skewed to polar residues over residues 898–927 (DQGT…SPRN) and 1238–1247 (YATTSPLETE).

It localises to the membrane. The sequence is that of Leucine-rich repeat-containing protein 53 (LRRC53) from Homo sapiens (Human).